The sequence spans 392 residues: Protein Wnt-1 (392 aa).

Residues 1-16 (MKCLWLLVITVLCLRC) form the signal peptide. Intrachain disulfides connect Cys-89–Cys-100, Cys-142–Cys-150, Cys-152–Cys-179, Cys-227–Cys-241, Cys-229–Cys-236, Cys-321–Cys-352, Cys-337–Cys-347, Cys-351–Cys-391, Cys-367–Cys-382, Cys-369–Cys-379, and Cys-374–Cys-375. Asn-99 carries an N-linked (GlcNAc...) asparagine glycan. Ser-233 is lipidated: O-palmitoleoyl serine; by PORCN. 2 N-linked (GlcNAc...) asparagine glycosylation sites follow: Asn-338 and Asn-368.

Belongs to the Wnt family. In terms of processing, palmitoleoylated by porcupine. The lipid group functions as a sorting signal, targeting the ligand to polarized vesicles that transport WNT-1 to unique sites at the cell surface. Depalmitoleoylated by notum, leading to inhibit Wnt signaling pathway.

Its subcellular location is the secreted. The protein resides in the extracellular space. It localises to the extracellular matrix. In terms of biological role, ligand for members of the frizzled family of seven transmembrane receptors. Probable developmental protein. In Bombyx mori (Silk moth), this protein is Protein Wnt-1 (WNT-1).